The sequence spans 360 residues: Glutamate 5-kinase (360 aa).

Lys7 lines the ATP pocket. The substrate site is built by Ser47, Asp134, and Asn146. Residues 166–167 (TD) and 208–214 (TGGIKTK) each bind ATP. Residues 273 to 344 (VGEIHLDDGA…IGINSRSETT (72 aa)) enclose the PUA domain.

Belongs to the glutamate 5-kinase family.

Its subcellular location is the cytoplasm. It catalyses the reaction L-glutamate + ATP = L-glutamyl 5-phosphate + ADP. The protein operates within amino-acid biosynthesis; L-proline biosynthesis; L-glutamate 5-semialdehyde from L-glutamate: step 1/2. Catalyzes the transfer of a phosphate group to glutamate to form L-glutamate 5-phosphate. This chain is Glutamate 5-kinase, found in Prochlorococcus marinus (strain NATL2A).